The chain runs to 224 residues: Na(+)-translocating NADH-quinone reductase subunit D (224 aa).

Helical transmembrane passes span 43–63 (TVMAIALTLVTGFSNLFISMI), 67–87 (IPSSIRMIVQMVIIASLVIVV), 104–124 (VFVGLIITNCIVMGRAEAFAM), 132–152 (FFDGIGNGLGYSAMLLVLGFV), and 179–199 (NGLLLLPPSAFFLIGLIIWAL).

This sequence belongs to the NqrDE/RnfAE family. As to quaternary structure, composed of six subunits; NqrA, NqrB, NqrC, NqrD, NqrE and NqrF.

Its subcellular location is the cell inner membrane. The enzyme catalyses a ubiquinone + n Na(+)(in) + NADH + H(+) = a ubiquinol + n Na(+)(out) + NAD(+). NQR complex catalyzes the reduction of ubiquinone-1 to ubiquinol by two successive reactions, coupled with the transport of Na(+) ions from the cytoplasm to the periplasm. NqrA to NqrE are probably involved in the second step, the conversion of ubisemiquinone to ubiquinol. In Pseudomonas aeruginosa (strain LESB58), this protein is Na(+)-translocating NADH-quinone reductase subunit D.